The sequence spans 365 residues: Carboxynorspermidine/carboxyspermidine decarboxylase (365 aa).

Lys-37 bears the N6-(pyridoxal phosphate)lysine mark. Residues Glu-233 and Asp-269 each coordinate substrate.

Belongs to the Orn/Lys/Arg decarboxylase class-II family. NspC subfamily. Homodimer. Requires pyridoxal 5'-phosphate as cofactor.

The protein localises to the cytoplasm. It catalyses the reaction carboxynorspermidine + H(+) = norspermidine + CO2. It carries out the reaction carboxyspermidine + H(+) = spermidine + CO2. Catalyzes the decarboxylation of carboxynorspermidine and carboxyspermidine. In Herminiimonas arsenicoxydans, this protein is Carboxynorspermidine/carboxyspermidine decarboxylase.